A 443-amino-acid chain; its full sequence is Ribosomal protein uS12 methylthiotransferase RimO (443 aa).

The MTTase N-terminal domain occupies 5–115 (PNIGFISLGC…VMKHVHKYVP (111 aa)). The [4Fe-4S] cluster site is built by Cys-14, Cys-50, Cys-79, Cys-147, Cys-151, and Cys-154. Residues 133-374 (LTPKHYAYLK…MQVQQRISAA (242 aa)) enclose the Radical SAM core domain. The 67-residue stretch at 377 to 443 (QQKVGKTLAV…ADEYDLWGTC (67 aa)) folds into the TRAM domain.

It belongs to the methylthiotransferase family. RimO subfamily. The cofactor is [4Fe-4S] cluster.

It is found in the cytoplasm. It catalyses the reaction L-aspartate(89)-[ribosomal protein uS12]-hydrogen + (sulfur carrier)-SH + AH2 + 2 S-adenosyl-L-methionine = 3-methylsulfanyl-L-aspartate(89)-[ribosomal protein uS12]-hydrogen + (sulfur carrier)-H + 5'-deoxyadenosine + L-methionine + A + S-adenosyl-L-homocysteine + 2 H(+). In terms of biological role, catalyzes the methylthiolation of an aspartic acid residue of ribosomal protein uS12. The protein is Ribosomal protein uS12 methylthiotransferase RimO of Actinobacillus pleuropneumoniae serotype 5b (strain L20).